The sequence spans 390 residues: Pyruvate dehydrogenase E1 component subunit alpha, somatic form, mitochondrial (390 aa).

The transit peptide at 1–29 (MRKMLAAVSRVLSGASQKPASRVLVASRN) directs the protein to the mitochondrion. Position 63 is an N6-acetyllysine; alternate (Lys-63). Lys-63 is subject to N6-succinyllysine; alternate. 11 residues coordinate pyruvate: His-92, Tyr-118, Arg-119, Ala-157, Gly-165, Val-167, Asp-196, Gly-197, Ala-198, Asn-225, and Tyr-227. Positions 118 and 119 each coordinate thiamine diphosphate. 6 residues coordinate thiamine diphosphate: Gly-165, Val-167, Asp-196, Gly-197, Ala-198, and Asn-225. Asp-196 lines the Mg(2+) pocket. Mg(2+) contacts are provided by Asn-225 and Tyr-227. Ser-232 is subject to Phosphoserine; by PDK1. Residue Lys-244 is modified to N6-acetyllysine; alternate. An N6-succinyllysine; alternate modification is found at Lys-244. Lys-277 bears the N6-succinyllysine mark. His-292 contributes to the thiamine diphosphate binding site. Ser-293 is subject to Phosphoserine; by PDK1, PDK2, PDK3 and PDK4. A Phosphoserine modification is found at Ser-295. The residue at position 300 (Ser-300) is a Phosphoserine; by PDK1, PDK2, PDK3 and PDK4. Position 301 is a phosphotyrosine (Tyr-301). An N6-acetyllysine; alternate modification is found at Lys-313. Lys-313 is subject to N6-succinyllysine; alternate. N6-acetyllysine occurs at positions 321 and 336. Lys-385 carries the N6-succinyllysine modification.

In terms of assembly, heterotetramer of two PDHA1 and two PDHB subunits. The heterotetramer interacts with DLAT, and is part of the multimeric pyruvate dehydrogenase complex that contains multiple copies of pyruvate dehydrogenase (E1), dihydrolipoamide acetyltransferase (DLAT, E2) and lipoamide dehydrogenase (DLD, E3). These subunits are bound to an inner core composed of about 48 DLAT and 12 PDHX molecules. Thiamine diphosphate serves as cofactor. The cofactor is Mg(2+). Phosphorylation at Ser-232, Ser-293 and Ser-300 by PDK family kinases inactivates the enzyme; for this phosphorylation at a single site is sufficient. Phosphorylation at Ser-293 interferes with access to active site, and thereby inactivates the enzyme. Dephosphorylation at all three sites, i.e. at Ser-232, Ser-293 and Ser-300, is required for reactivation. In terms of processing, acetylation alters the phosphorylation pattern. Deacetylated by SIRT3.

The protein localises to the mitochondrion matrix. The catalysed reaction is N(6)-[(R)-lipoyl]-L-lysyl-[protein] + pyruvate + H(+) = N(6)-[(R)-S(8)-acetyldihydrolipoyl]-L-lysyl-[protein] + CO2. With respect to regulation, pyruvate dehydrogenase activity is inhibited by phosphorylation of PDHA1; it is reactivated by dephosphorylation. The pyruvate dehydrogenase complex catalyzes the overall conversion of pyruvate to acetyl-CoA and CO(2), and thereby links the glycolytic pathway to the tricarboxylic cycle. The polypeptide is Pyruvate dehydrogenase E1 component subunit alpha, somatic form, mitochondrial (PDHA1) (Pan troglodytes (Chimpanzee)).